Here is a 309-residue protein sequence, read N- to C-terminus: DnaJ-like protein MG002 homolog (309 aa).

One can recognise a J domain in the interval 1–66; that stretch reads MTLYDLLELP…KAEYDAMLRF (66 aa).

In Mycoplasma pneumoniae (strain ATCC 29342 / M129 / Subtype 1) (Mycoplasmoides pneumoniae), this protein is DnaJ-like protein MG002 homolog.